Consider the following 418-residue polypeptide: Nucleoredoxin (418 aa).

The Thioredoxin domain occupies 109-309; that stretch reads KYKVTSIPSL…ESNAVQLHEG (201 aa).

It belongs to the nucleoredoxin family.

It is found in the cytoplasm. The protein resides in the cytosol. It localises to the nucleus. It carries out the reaction [protein]-dithiol + NAD(+) = [protein]-disulfide + NADH + H(+). The enzyme catalyses [protein]-dithiol + NADP(+) = [protein]-disulfide + NADPH + H(+). Its function is as follows. Functions as a redox-dependent negative regulator of the Wnt signaling pathway. The sequence is that of Nucleoredoxin (nxn) from Danio rerio (Zebrafish).